The sequence spans 73 residues: Large ribosomal subunit protein bL31 (73 aa).

The protein belongs to the bacterial ribosomal protein bL31 family. Type A subfamily. In terms of assembly, part of the 50S ribosomal subunit.

Functionally, binds the 23S rRNA. The protein is Large ribosomal subunit protein bL31 of Brucella abortus (strain 2308).